We begin with the raw amino-acid sequence, 160 residues long: MTEKHTLRLADPSAIDSIISVDEFLQIKEQYDAEQPLITLQTKFNLAWALVRSDSTQHVQQGLSLFCSIYKDSPERRLECLYYIALSHYKLKQYEESRRYLNMLLSKDPNSPEALKLKNRLYDAVTKEGYIGMVVVAGAVVSVAALVGWASKRLFSKRRP.

Topologically, residues 1–129 are cytoplasmic; the sequence is MTEKHTLRLA…RLYDAVTKEG (129 aa). The stretch at 78–111 is one TPR repeat; the sequence is LECLYYIALSHYKLKQYEESRRYLNMLLSKDPNS. A helical membrane pass occupies residues 130–150; the sequence is YIGMVVVAGAVVSVAALVGWA. Residues 151–160 lie on the Mitochondrial intermembrane side of the membrane; that stretch reads SKRLFSKRRP.

The protein belongs to the FIS1 family.

The protein localises to the mitochondrion outer membrane. Its function is as follows. Has a role in mitochondrial fission. Has a role in outer membrane fission but not matrix separation. This chain is Mitochondrial fission 1 protein (fis1), found in Schizosaccharomyces pombe (strain 972 / ATCC 24843) (Fission yeast).